We begin with the raw amino-acid sequence, 167 residues long: ATP synthase subunit b (167 aa).

The chain crosses the membrane as a helical span at residues 10–30 (TFFFQLANTLIMFLILKHFLF).

This sequence belongs to the ATPase B chain family. As to quaternary structure, F-type ATPases have 2 components, F(1) - the catalytic core - and F(0) - the membrane proton channel. F(1) has five subunits: alpha(3), beta(3), gamma(1), delta(1), epsilon(1). F(0) has three main subunits: a(1), b(2) and c(10-14). The alpha and beta chains form an alternating ring which encloses part of the gamma chain. F(1) is attached to F(0) by a central stalk formed by the gamma and epsilon chains, while a peripheral stalk is formed by the delta and b chains.

It is found in the cell membrane. Its function is as follows. F(1)F(0) ATP synthase produces ATP from ADP in the presence of a proton or sodium gradient. F-type ATPases consist of two structural domains, F(1) containing the extramembraneous catalytic core and F(0) containing the membrane proton channel, linked together by a central stalk and a peripheral stalk. During catalysis, ATP synthesis in the catalytic domain of F(1) is coupled via a rotary mechanism of the central stalk subunits to proton translocation. In terms of biological role, component of the F(0) channel, it forms part of the peripheral stalk, linking F(1) to F(0). This chain is ATP synthase subunit b, found in Alkaliphilus oremlandii (strain OhILAs) (Clostridium oremlandii (strain OhILAs)).